Reading from the N-terminus, the 202-residue chain is D-alanyl-D-alanine dipeptidase (202 aa).

Zn(2+)-binding residues include His-116 and Asp-123. Glu-181 (proton donor/acceptor) is an active-site residue. His-184 contacts Zn(2+).

This sequence belongs to the peptidase M15D family. Zn(2+) serves as cofactor.

The enzyme catalyses D-alanyl-D-alanine + H2O = 2 D-alanine. In terms of biological role, catalyzes hydrolysis of the D-alanyl-D-alanine dipeptide. The chain is D-alanyl-D-alanine dipeptidase (vanXB) from Enterococcus faecalis (strain ATCC 700802 / V583).